Consider the following 242-residue polypeptide: Small ribosomal subunit protein uS2 (242 aa).

This sequence belongs to the universal ribosomal protein uS2 family.

The protein is Small ribosomal subunit protein uS2 of Aeromonas salmonicida (strain A449).